Here is an 83-residue protein sequence, read N- to C-terminus: UPF0248 protein PH1212.1 (83 aa).

This sequence belongs to the UPF0248 family.

This Pyrococcus horikoshii (strain ATCC 700860 / DSM 12428 / JCM 9974 / NBRC 100139 / OT-3) protein is UPF0248 protein PH1212.1.